The primary structure comprises 123 residues: Small ribosomal subunit protein uS12 (123 aa).

Asp89 carries the 3-methylthioaspartic acid modification.

This sequence belongs to the universal ribosomal protein uS12 family. As to quaternary structure, part of the 30S ribosomal subunit. Contacts proteins S8 and S17. May interact with IF1 in the 30S initiation complex.

Functionally, with S4 and S5 plays an important role in translational accuracy. Interacts with and stabilizes bases of the 16S rRNA that are involved in tRNA selection in the A site and with the mRNA backbone. Located at the interface of the 30S and 50S subunits, it traverses the body of the 30S subunit contacting proteins on the other side and probably holding the rRNA structure together. The combined cluster of proteins S8, S12 and S17 appears to hold together the shoulder and platform of the 30S subunit. The chain is Small ribosomal subunit protein uS12 from Maridesulfovibrio salexigens (strain ATCC 14822 / DSM 2638 / NCIMB 8403 / VKM B-1763) (Desulfovibrio salexigens).